The sequence spans 228 residues: Ribulose-phosphate 3-epimerase (228 aa).

Serine 9 is a substrate binding site. Positions 34, 36, and 70 each coordinate a divalent metal cation. Residue aspartate 36 is the Proton acceptor of the active site. Residues histidine 70, 146–149 (GFPG), 179–181 (DGG), and 201–202 (GS) each bind substrate. Aspartate 179 is a binding site for a divalent metal cation. Aspartate 179 functions as the Proton donor in the catalytic mechanism.

The protein belongs to the ribulose-phosphate 3-epimerase family. Requires a divalent metal cation as cofactor.

It catalyses the reaction D-ribulose 5-phosphate = D-xylulose 5-phosphate. Its pathway is carbohydrate degradation. Functionally, catalyzes the reversible epimerization of D-ribulose 5-phosphate to D-xylulose 5-phosphate. The sequence is that of Ribulose-phosphate 3-epimerase from Buchnera aphidicola subsp. Baizongia pistaciae (strain Bp).